Reading from the N-terminus, the 953-residue chain is MSKKRLHEIAKEIGKSSKEVVEYAKYLGLDVKSHASSVEEADAKKIISSFSKASKPDVTASQTVKPKEVAQPSVTVVKETGSEHVEKTQVSKPKSRNFKAEREARAKEQAARKQANGSSHRSQERRGGYRQPNNHQTNEQGNKRITHRSQGDTNDKRIERKASNVSPRHDNHQLVGDRNRSFAKENHKNGRFTNQKKQGRQEPQSKSPKIDFKARAAALKAEQNAEYSRQSETRFRAQQEAKRLAELARQEAKEAALKAQAEEMSHREAALKSIEEAETKLKSSNISAKSTADNRRKKQARPEKNRELTHHSQEGQKKNKKSWNSQNQVRNQKNSNWNKNKKTKKGKNVKNTNTAPKPVTERKFHELPKEFEYTEGMTVAEIAKRIKREPAEIVKKLFMMGVMATQNQSLDGDTIELLMVDYGIEAKAKVEVDNADIERFFEDENYLNPENIVERAPVVTIMGHVDHGKTTLLDTLRNSRVATGEAGGITQHIGAYQIEEAGKKITFLDTPGHAAFTSMRARGASVTDITILIVAADDGVMPQTIEAINHSKAAGVPIIVAINKIDKPGANPERVIAELAEYGIISTAWGGECEFVEISAKFNKNIDELLETVLLVAEVEELKADPTVRAIGTVIEARLDKGKGAIATLLVQQGTLHVQDPIVVGNTFGRVRAMVNDLGRRVKSAEPSTPVSITGLNETPMAGDHFAVYADEKAARAAGEERSKRALLKQRQNTQRVSLDNLFDTLKAGEIKTVNVIIKADVQGSVEALAASLVKIEVEGVRVNVVHSAVGAINESDVTLAEASNAVIIGFNVRPTPQARQQADTDDVEIRLHSIIYKVIEEVEEAMKGKLDPVYQEKILGEAIIRETFKVSKVGTIGGFMVINGKVTRDSSVRVIRDSVVIFDGKLASLKHYKDDVKEVGNAQEGGLMIENFNDLKVDDTIEAYIMEEIVRK.

Disordered regions lie at residues 51–242 and 279–363; these read SKAS…QEAK and TKLK…TERK. 2 stretches are compositionally biased toward basic and acidic residues: residues 80-89 and 98-111; these read TGSEHVEKTQ and FKAE…EQAA. Residues 131-140 are compositionally biased toward polar residues; that stretch reads QPNNHQTNEQ. Over residues 149–188 the composition is skewed to basic and acidic residues; the sequence is SQGDTNDKRIERKASNVSPRHDNHQLVGDRNRSFAKENHK. A compositionally biased stretch (polar residues) spans 191 to 207; it reads RFTNQKKQGRQEPQSKS. The segment covering 229–242 has biased composition (basic and acidic residues); the sequence is RQSETRFRAQQEAK. Positions 282 to 291 are enriched in polar residues; sequence KSSNISAKST. The segment covering 300–317 has biased composition (basic and acidic residues); the sequence is ARPEKNRELTHHSQEGQK. Low complexity predominate over residues 322–338; it reads SWNSQNQVRNQKNSNWN. Positions 339 to 348 are enriched in basic residues; sequence KNKKTKKGKN. In terms of domain architecture, tr-type G spans 454–623; the sequence is ERAPVVTIMG…LLVAEVEELK (170 aa). The interval 463–470 is G1; sequence GHVDHGKT. 463–470 provides a ligand contact to GTP; the sequence is GHVDHGKT. Positions 488–492 are G2; the sequence is GITQH. Residues 509-512 form a G3 region; sequence DTPG. GTP is bound by residues 509-513 and 563-566; these read DTPGH and NKID. The interval 563–566 is G4; that stretch reads NKID. Positions 599-601 are G5; it reads SAK.

Belongs to the TRAFAC class translation factor GTPase superfamily. Classic translation factor GTPase family. IF-2 subfamily.

It localises to the cytoplasm. Its function is as follows. One of the essential components for the initiation of protein synthesis. Protects formylmethionyl-tRNA from spontaneous hydrolysis and promotes its binding to the 30S ribosomal subunits. Also involved in the hydrolysis of GTP during the formation of the 70S ribosomal complex. The chain is Translation initiation factor IF-2 from Streptococcus pyogenes serotype M49 (strain NZ131).